Here is a 62-residue protein sequence, read N- to C-terminus: MPPKIHPSLSTGYFVSLDTMPPKNLCHQKVCHLGMKADLFALLKHAEIMKHIASFNVSVHGV.

This is an uncharacterized protein from Caenorhabditis elegans.